The primary structure comprises 564 residues: uncharacterized protein (564 aa).

Transmembrane regions (helical) follow at residues 12-32, 97-119, 139-161, 188-208, 213-233, 277-297, 306-326, and 348-368; these read TYYL…LFIL, MTAY…YVLL, AFAL…LALW, FVLG…YDAI, WNLM…FVEY, MTVH…ALLF, NVYL…AFWF, and FHFL…YLIW.

It is found in the cell membrane. This is an uncharacterized protein from Bacillus subtilis (strain 168).